Here is a 101-residue protein sequence, read N- to C-terminus: Urease subunit beta (101 aa).

Belongs to the urease beta subunit family. Heterotrimer of UreA (gamma), UreB (beta) and UreC (alpha) subunits. Three heterotrimers associate to form the active enzyme.

The protein resides in the cytoplasm. It carries out the reaction urea + 2 H2O + H(+) = hydrogencarbonate + 2 NH4(+). It participates in nitrogen metabolism; urea degradation; CO(2) and NH(3) from urea (urease route): step 1/1. This chain is Urease subunit beta, found in Granulibacter bethesdensis (strain ATCC BAA-1260 / CGDNIH1).